An 896-amino-acid polypeptide reads, in one-letter code: Bifunctional glutamine synthetase adenylyltransferase/adenylyl-removing enzyme (896 aa).

Positions Met1–Glu411 are adenylyl removase. An adenylyl transferase region spans residues Asn417–Val896.

It belongs to the GlnE family. Mg(2+) serves as cofactor.

The catalysed reaction is [glutamine synthetase]-O(4)-(5'-adenylyl)-L-tyrosine + phosphate = [glutamine synthetase]-L-tyrosine + ADP. The enzyme catalyses [glutamine synthetase]-L-tyrosine + ATP = [glutamine synthetase]-O(4)-(5'-adenylyl)-L-tyrosine + diphosphate. Involved in the regulation of glutamine synthetase GlnA, a key enzyme in the process to assimilate ammonia. When cellular nitrogen levels are high, the C-terminal adenylyl transferase (AT) inactivates GlnA by covalent transfer of an adenylyl group from ATP to specific tyrosine residue of GlnA, thus reducing its activity. Conversely, when nitrogen levels are low, the N-terminal adenylyl removase (AR) activates GlnA by removing the adenylyl group by phosphorolysis, increasing its activity. The regulatory region of GlnE binds the signal transduction protein PII (GlnB) which indicates the nitrogen status of the cell. The protein is Bifunctional glutamine synthetase adenylyltransferase/adenylyl-removing enzyme of Neisseria meningitidis serogroup B (strain ATCC BAA-335 / MC58).